A 464-amino-acid chain; its full sequence is A-type ATP synthase subunit B (464 aa).

Belongs to the ATPase alpha/beta chains family. As to quaternary structure, has multiple subunits with at least A(3), B(3), C, D, E, F, H, I and proteolipid K(x).

It localises to the cell membrane. Its function is as follows. Component of the A-type ATP synthase that produces ATP from ADP in the presence of a proton gradient across the membrane. The B chain is a regulatory subunit. This is A-type ATP synthase subunit B from Methanococcus aeolicus (strain ATCC BAA-1280 / DSM 17508 / OCM 812 / Nankai-3).